A 370-amino-acid polypeptide reads, in one-letter code: NSFL1 cofactor p47 (370 aa).

The disordered stretch occupies residues 54 to 73; sequence SQATPSSVSRGTAPSDNRVT. 3 positions are modified to phosphoserine: S74, S102, and S114. Disordered regions lie at residues 80–116 and 138–157; these read HDQDEEEEEEEGQRFYAGGSERSGQQIVGPPRKKSPN and TKSPGETSKPRPFAGGGYRL. Residues 109–115 carry the Nuclear localization signal motif; that stretch reads PPRKKSP. Residue S140 is modified to Phosphoserine; by CDK1. Y167 carries the post-translational modification Phosphotyrosine. A Nuclear localization signal motif is present at residues 172 to 175; the sequence is RRRH. Residues S176, S192, and S272 each carry the phosphoserine modification. Residues 179–244 form the SEP domain; it reads DVHVVLKLWK…MEDHRDEDFV (66 aa). Residues 291–368 enclose the UBX domain; it reads EAEPTTNIQI…NLLNAVIVQR (78 aa).

Belongs to the NSFL1C family. As to quaternary structure, part of a ternary complex containing STX5A, NSFL1C and VCP. NSFL1C forms a homotrimer that binds to one end of a VCP homohexamer. The complex binds to membranes enriched in phosphatidylethanolamine-containing lipids and promotes Golgi membrane fusion. Interaction with VCIP135 leads to dissociation of the complex via ATP hydrolysis by VCP. Binds ubiquitin and mono-ubiquitinated proteins via its N-terminal UBA-like domain when bound to VCP. Phosphorylated during mitosis. Phosphorylation inhibits interaction with Golgi membranes and is required for the fragmentation of the Golgi stacks during mitosis. As to expression, highly expressed in heart, brain, spleen, lung, liver, muscle, kidney and testis.

The protein localises to the nucleus. It is found in the golgi apparatus. Its subcellular location is the golgi stack. The protein resides in the chromosome. It localises to the cytoplasm. The protein localises to the cytoskeleton. It is found in the microtubule organizing center. Its subcellular location is the centrosome. Functionally, reduces the ATPase activity of VCP. Necessary for the fragmentation of Golgi stacks during mitosis and for VCP-mediated reassembly of Golgi stacks after mitosis. May play a role in VCP-mediated formation of transitional endoplasmic reticulum (tER). Inhibits the activity of CTSL (in vitro). Together with UBXN2B/p37, regulates the centrosomal levels of kinase AURKA/Aurora A during mitotic progression by promoting AURKA removal from centrosomes in prophase. Also, regulates spindle orientation during mitosis. The protein is NSFL1 cofactor p47 (Nsfl1c) of Rattus norvegicus (Rat).